The following is a 330-amino-acid chain: Elongation factor Ts (330 aa).

The interval 79–82 (TDFV) is involved in Mg(2+) ion dislocation from EF-Tu.

The protein belongs to the EF-Ts family.

It localises to the cytoplasm. In terms of biological role, associates with the EF-Tu.GDP complex and induces the exchange of GDP to GTP. It remains bound to the aminoacyl-tRNA.EF-Tu.GTP complex up to the GTP hydrolysis stage on the ribosome. This chain is Elongation factor Ts, found in Bacteroides thetaiotaomicron (strain ATCC 29148 / DSM 2079 / JCM 5827 / CCUG 10774 / NCTC 10582 / VPI-5482 / E50).